A 367-amino-acid polypeptide reads, in one-letter code: Centromere protein L (367 aa).

The protein belongs to the CENP-L/IML3 family.

Its subcellular location is the nucleus. It is found in the chromosome. The protein resides in the centromere. Probable component of a centromeric complex involved in assembly of kinetochore proteins, mitotic progression and chromosome segregation. This chain is Centromere protein L (cenpl), found in Danio rerio (Zebrafish).